Here is a 127-residue protein sequence, read N- to C-terminus: Protein pkiA (127 aa).

The HIT domain maps to 16–127 (IFAKIISGAI…GGRQMNWPPG (112 aa)).

This is Protein pkiA (pkiA) from Dictyostelium discoideum (Social amoeba).